A 131-amino-acid polypeptide reads, in one-letter code: Large-conductance mechanosensitive channel (131 aa).

Helical transmembrane passes span 8–28 (FALK…GAFG), 30–50 (IVTS…VGGI), and 72–92 (GQFI…FMFI).

This sequence belongs to the MscL family. Homopentamer.

It is found in the cell membrane. Channel that opens in response to stretch forces in the membrane lipid bilayer. May participate in the regulation of osmotic pressure changes within the cell. The chain is Large-conductance mechanosensitive channel from Alkaliphilus oremlandii (strain OhILAs) (Clostridium oremlandii (strain OhILAs)).